A 126-amino-acid chain; its full sequence is Holo-[acyl-carrier-protein] synthase (126 aa).

Residues aspartate 9 and glutamate 58 each contribute to the Mg(2+) site.

It belongs to the P-Pant transferase superfamily. AcpS family. It depends on Mg(2+) as a cofactor.

It is found in the cytoplasm. It carries out the reaction apo-[ACP] + CoA = holo-[ACP] + adenosine 3',5'-bisphosphate + H(+). Transfers the 4'-phosphopantetheine moiety from coenzyme A to a Ser of acyl-carrier-protein. This chain is Holo-[acyl-carrier-protein] synthase, found in Hamiltonella defensa subsp. Acyrthosiphon pisum (strain 5AT).